A 655-amino-acid chain; its full sequence is Chaperone protein dnaK1 (655 aa).

At Thr197 the chain carries Phosphothreonine; by autocatalysis.

This sequence belongs to the heat shock protein 70 family.

Its function is as follows. Acts as a chaperone. The polypeptide is Chaperone protein dnaK1 (dnaK1) (Synechococcus elongatus (strain ATCC 33912 / PCC 7942 / FACHB-805) (Anacystis nidulans R2)).